A 337-amino-acid chain; its full sequence is Glyceraldehyde-3-phosphate dehydrogenase 1, cytosolic (337 aa).

Positions 1-151 (MGKIKIGING…YTSDVNIVSN (151 aa)) are binding to NAD. NAD(+) is bound by residues 13–14 (RI), Asp35, and Arg82. Residues 152–337 (ASCTTNCLAP…DLIRHMFKTQ (186 aa)) form a catalytic region. D-glyceraldehyde 3-phosphate is bound by residues 153–155 (SCT), Thr184, 213–214 (TG), and Arg236. The active-site Nucleophile is the Cys154. Position 318 (Asn318) interacts with NAD(+).

The protein belongs to the glyceraldehyde-3-phosphate dehydrogenase family. Homotetramer.

It localises to the cytoplasm. The catalysed reaction is D-glyceraldehyde 3-phosphate + phosphate + NAD(+) = (2R)-3-phospho-glyceroyl phosphate + NADH + H(+). It participates in carbohydrate degradation; glycolysis; pyruvate from D-glyceraldehyde 3-phosphate: step 1/5. Key enzyme in glycolysis that catalyzes the first step of the pathway by converting D-glyceraldehyde 3-phosphate (G3P) into 3-phospho-D-glyceroyl phosphate. Essential for the maintenance of cellular ATP levels and carbohydrate metabolism. This chain is Glyceraldehyde-3-phosphate dehydrogenase 1, cytosolic (GAPC1), found in Zea mays (Maize).